The chain runs to 213 residues: Cell division protein SepF 2 (213 aa).

The interval Glu16–Pro89 is disordered. Residues Pro27–Pro39 are compositionally biased toward acidic residues.

This sequence belongs to the SepF family. As to quaternary structure, homodimer. Interacts with FtsZ.

Its subcellular location is the cytoplasm. Its function is as follows. Cell division protein that is part of the divisome complex and is recruited early to the Z-ring. Probably stimulates Z-ring formation, perhaps through the cross-linking of FtsZ protofilaments. Its function overlaps with FtsA. The polypeptide is Cell division protein SepF 2 (Streptomyces coelicolor (strain ATCC BAA-471 / A3(2) / M145)).